We begin with the raw amino-acid sequence, 200 residues long: Large ribosomal subunit protein uL4 (200 aa).

Residues 38-73 (GRQGTKGQKSRSDVSGGGKRPWRQKGTGRARAGTTR) form a disordered region.

It belongs to the universal ribosomal protein uL4 family. In terms of assembly, part of the 50S ribosomal subunit.

One of the primary rRNA binding proteins, this protein initially binds near the 5'-end of the 23S rRNA. It is important during the early stages of 50S assembly. It makes multiple contacts with different domains of the 23S rRNA in the assembled 50S subunit and ribosome. In terms of biological role, forms part of the polypeptide exit tunnel. The protein is Large ribosomal subunit protein uL4 of Ectopseudomonas mendocina (strain ymp) (Pseudomonas mendocina).